Reading from the N-terminus, the 362-residue chain is D-alanine--D-alanine ligase (362 aa).

An ATP-grasp domain is found at 153–357 (KKIAREAGIP…YADLLTTLVS (205 aa)). ATP is bound at residue 180–235 (RELLGLPVFVKPARGGSSIGISKVDSWRDLPAAIEEAASHDPKVIIEAMITGPEVE). Mg(2+)-binding residues include Asp-312, Glu-324, and Asn-326.

The protein belongs to the D-alanine--D-alanine ligase family. Mg(2+) serves as cofactor. It depends on Mn(2+) as a cofactor.

It localises to the cytoplasm. The enzyme catalyses 2 D-alanine + ATP = D-alanyl-D-alanine + ADP + phosphate + H(+). The protein operates within cell wall biogenesis; peptidoglycan biosynthesis. Functionally, cell wall formation. In Corynebacterium urealyticum (strain ATCC 43042 / DSM 7109), this protein is D-alanine--D-alanine ligase.